The chain runs to 70 residues: Conotoxin ArMKLT2-0112 (70 aa).

Residues 1–22 (MKLTCVLIIAVLFLTACQLTTG) form the signal peptide. Positions 23-40 (EQKDHALRSTDKNSKLTR) are excised as a propeptide. Residue Gln41 is modified to Pyrrolidone carboxylic acid. 3 disulfides stabilise this stretch: Cys42-Cys56, Cys49-Cys60, and Cys55-Cys67.

Belongs to the conotoxin O1 superfamily. Expressed by the venom duct.

Its subcellular location is the secreted. The chain is Conotoxin ArMKLT2-0112 from Conus arenatus (Sand-dusted cone).